The primary structure comprises 417 residues: Guanine nucleotide-exchange factor SEC12 (417 aa).

The Cytoplasmic segment spans residues 1–388 (MGRRRGVELY…QLHLLPSRRS (388 aa)). 3'-nitrotyrosine is present on tyrosine 10. The tract at residues 101–135 (KGSKAEKSGSKEQGPRQRKGAPPAEKKSGAQVHPE) is disordered. Basic and acidic residues predominate over residues 103–115 (SKAEKSGSKEQGP). WD repeat units lie at residues 152-191 (SNEPLQKVVCFNHDNTLLATGGTDGHVRVWKVPSLEKVLE), 194-232 (AHEGEIGDLTLGPDGKLVTVGWDFKASVWQKDQLVTQLQ), and 298-337 (CGHEVISCLSVSDSGTFLGLGTVTGSVAIYIAFSLQRLYY). The helical transmembrane segment at 389–409 (VPVWLLLLLCVGLIIVTILLL) threads the bilayer. Residues 410-417 (QTAFPGFL) lie on the Lumenal side of the membrane.

As to quaternary structure, interacts with SAR1B (GDP-bound form). Interacts with MIA2; recruits PREB to endoplasmic reticulum exit sites. Interacts with CIDEB; facilitating loading of SCAP-SREBP into COPII vesicles.

It is found in the endoplasmic reticulum membrane. It localises to the nucleus. Functionally, guanine nucleotide exchange factor (GEF) that regulates the assembly of the coat protein complex II/COPII in endoplasmic reticulum (ER) to Golgi vesicle-mediated transport. Selectively activates SAR1A and SAR1B by promoting the exchange of guanosine diphosphate (GDP) for guanosine triphosphate (GTP) in these small GTPases. In their activated GTP-bound state, SAR1A and SAR1B insert into the membrane of the endoplasmic reticulum where they recruit the remainder of the coat protein complex II/COPII which is responsible for both the sorting of proteins and the deformation and budding of membranes into vesicles destined to the Golgi. Was first identified based on its probable role in the regulation of pituitary gene transcription. Binds to the prolactin gene (PRL) promoter and seems to activate transcription. The chain is Guanine nucleotide-exchange factor SEC12 from Mus musculus (Mouse).